Consider the following 265-residue polypeptide: U6 snRNA phosphodiesterase 1 (265 aa).

Positions 1-67 (MSAAPLVGYS…EGPVDDSAKH (67 aa)) are disordered. The span at 20-32 (AGARVRPGAEGRS) shows a compositional bias: basic and acidic residues. His120 (proton acceptor) is an active-site residue. 120–122 (HLS) provides a ligand contact to AMP. UMP is bound by residues Gln164, Tyr202, and 206 to 210 (SFHIS). Residues Tyr202 and 204–210 (DPSFHIS) each bind AMP. His208 acts as the Proton donor in catalysis.

This sequence belongs to the 2H phosphoesterase superfamily. USB1 family. In terms of assembly, interacts with PLRG1, CDC5L and PRPF19.

It is found in the nucleus. The enzyme catalyses a 3'-end uridylyl-uridine-RNA = a 3'-end 2',3'-cyclophospho-uridine-RNA + uridine. The catalysed reaction is a 3'-end uridylyl-adenosine-RNA = a 3'-end 2',3'-cyclophospho-uridine-RNA + adenosine. Its function is as follows. 3'-5' RNA exonuclease that trims the 3' end of oligo(U) and oligo(A) tracts of the pre-U6 small nuclear RNA (snRNA) molecule, leading to the formation of a mature U6 snRNA 3' end-terminated with a 2',3'-cyclic phosphate. Participates in the U6 snRNA 3' end processing that prevents U6 snRNA degradation. In addition also removes uridines from the 3' end of U6atac snRNA and possibly the vault RNA VTRNA1-1. This Bos taurus (Bovine) protein is U6 snRNA phosphodiesterase 1.